Reading from the N-terminus, the 213-residue chain is Probable transaldolase (213 aa).

Lys-83 (schiff-base intermediate with substrate) is an active-site residue.

It belongs to the transaldolase family. Type 3B subfamily.

It is found in the cytoplasm. It carries out the reaction D-sedoheptulose 7-phosphate + D-glyceraldehyde 3-phosphate = D-erythrose 4-phosphate + beta-D-fructose 6-phosphate. It participates in carbohydrate degradation; pentose phosphate pathway; D-glyceraldehyde 3-phosphate and beta-D-fructose 6-phosphate from D-ribose 5-phosphate and D-xylulose 5-phosphate (non-oxidative stage): step 2/3. Functionally, transaldolase is important for the balance of metabolites in the pentose-phosphate pathway. The chain is Probable transaldolase from Geobacillus sp. (strain WCH70).